Reading from the N-terminus, the 560-residue chain is MELPAVGEHVFAVESIEKKRIRKGRVEYLVKWRGWSPKYNTWEPEENILDPRLLIAFQNRERQEQLMGYRKRGPKPKPLVVQVPTFARRSNVLTGLQDSSTDNRAKLDLGAQGKGQGHQYELNSKKHHQYQPHSKERAGKPPPPGKSGKYYYQLNSKKHHPYQPDPKMYDLQYQGGHKEAPSPTCPDLGAKSHPPDKWAQGAGAKGYLGAVKPLAGAAGAPGKGSEKGPPNGMMPAPKEAVTGNGIGGKMKIVKNKNKNGRIVIVMSKYMENGMQAVKIKSGEVAEGEARSPSHKKRAADERHPPADRTFKKAAGAEEKKVEAPPKRREEEVSGVSDPQPQDAGSRKLSPTKEAFGEQPLQLTTKPDLLAWDPARNTHPPSHHPHPHPHHHHHHHHHHHHAVGLNLSHVRKRCLSETHGEREPCKKRLTARSISTPTCLGGSPAAERPADLPPAAALPQPEVILLDSDLDEPIDLRCVKTRSEAGEPPSSLQVKPETPASAAVAVAAAAAPTTTAEKPPAEAQDEPAESLSEFKPFFGNIIITDVTANCLTVTFKEYVTV.

The tract at residues 1 to 75 (MELPAVGEHV…LMGYRKRGPK (75 aa)) is involved in interaction with H3C15 and H3C1. Residues 1-539 (MELPAVGEHV…LSEFKPFFGN (539 aa)) are interaction with BMI1. A Chromo domain is found at 11–69 (FAVESIEKKRIRKGRVEYLVKWRGWSPKYNTWEPEENILDPRLLIAFQNRERQEQLMGY). Glycyl lysine isopeptide (Lys-Gly) (interchain with G-Cter in SUMO2) cross-links involve residues K77, K106, K114, and K125. The interval 92 to 152 (VLTGLQDSST…PPGKSGKYYY (61 aa)) is disordered. K149 carries the N6-acetyllysine; alternate modification. Residue K149 forms a Glycyl lysine isopeptide (Lys-Gly) (interchain with G-Cter in SUMO2); alternate linkage. Residues K157, K167, and K178 each participate in a glycyl lysine isopeptide (Lys-Gly) (interchain with G-Cter in SUMO2) cross-link. A Phosphoserine modification is found at S182. Residues K191, K205, K212, K223, K249, K268, K278, and K280 each participate in a glycyl lysine isopeptide (Lys-Gly) (interchain with G-Cter in SUMO2) cross-link. The tract at residues 217–243 (AAGAPGKGSEKGPPNGMMPAPKEAVTG) is disordered. Basic and acidic residues-rich tracts occupy residues 281–291 (SGEVAEGEARS) and 298–331 (AADERHPPADRTFKKAAGAEEKKVEAPPKRREEE). The segment at 281–404 (SGEVAEGEAR…HHHHHHAVGL (124 aa)) is disordered. Residues K320, K352, and K365 each participate in a glycyl lysine isopeptide (Lys-Gly) (interchain with G-Cter in SUMO2) cross-link. Residues 380–401 (PSHHPHPHPHHHHHHHHHHHHA) are compositionally biased toward basic residues. Residue S467 is modified to Phosphoserine. A Glycyl lysine isopeptide (Lys-Gly) (interchain with G-Cter in SUMO2); alternate cross-link involves residue K494. A Glycyl lysine isopeptide (Lys-Gly) (interchain with G-Cter in SUMO); alternate cross-link involves residue K494. A Phosphothreonine; by HIPK2 modification is found at T497. The segment covering 509–521 (AAPTTTAEKPPAE) has biased composition (low complexity). Residues 509–528 (AAPTTTAEKPPAEAQDEPAE) form a disordered region. An involved in interaction with H3C15 and RNF2 region spans residues 531–556 (SEFKPFFGNIIITDVTANCLTVTFKE). An interaction with RNF2 region spans residues 540–560 (IIITDVTANCLTVTFKEYVTV).

As to quaternary structure, interacts with histone H3-K9Me3. Interacts with CHTOP. Component of a PRC1-like complex. The composition of the PRC1 complex differs between the PRC1 complex in pluripotent embryonic stem cells containing RNF2, CBX7 and PCGF2, and the PRC1 complex in differentiating cells containing RNF2, CBX2, CBX4 and BMI1. Self-associates. Interacts with SUV39H1 and HIPK2. Interacts with CSNK2B. May interact with H3C15, H3C1 and RNF2. Interacts with SUMO1P1/SUMO5. Interacts with PRDM1/Blimp-1. In terms of processing, ubiquitinated. Ubiquitination regulates the function of the Polycomb group (PcG) multiprotein PRC1-like complex. Deubiquitinated by USP26. Phosphorylated on Thr-497 by HIPK2 upon DNA damage. This phosphorylation stimulates E3 SUMO-protein ligase activity and promotes sumoylation on Lys-494, as well as sumoylation of other target proteins, such as HNRNPK. In terms of tissue distribution, ubiquitous.

It is found in the nucleus. The protein localises to the nucleus speckle. It functions in the pathway protein modification; protein sumoylation. E3 SUMO-protein ligase that catalyzes sumoylation of target proteins by promoting the transfer of SUMO from the E2 enzyme to the substrate. Involved in the sumoylation of HNRNPK, a p53/TP53 transcriptional coactivator, hence indirectly regulates p53/TP53 transcriptional activation resulting in p21/CDKN1A expression. Monosumoylates ZNF131. Its function is as follows. Component of a Polycomb group (PcG) multiprotein PRC1-like complex, a complex class required to maintain the transcriptionally repressive state of many genes, including Hox genes, throughout development. PcG PRC1 complex acts via chromatin remodeling and modification of histones; it mediates monoubiquitination of histone H2A 'Lys-119', rendering chromatin heritably changed in its expressibility. Binds to histone H3 trimethylated at 'Lys-9' (H3K9me3). Plays a role in the lineage differentiation of the germ layers in embryonic development. The polypeptide is E3 SUMO-protein ligase CBX4 (CBX4) (Homo sapiens (Human)).